Reading from the N-terminus, the 646-residue chain is Glutamine--tRNA ligase protein virJ (646 aa).

The interval 25-65 (NELKKRIQKRARKAAAAANRSNAQQEKGNKPAANKPAAKPE) is disordered. Low complexity predominate over residues 38 to 61 (AAAAANRSNAQQEKGNKPAANKPA). Positions 98 to 108 (PEPNGYLHLGH) match the 'HIGH' region motif. Residues 99-101 (EPN) and 105-111 (HLGHAKA) contribute to the ATP site. Residues aspartate 147 and tyrosine 296 each coordinate L-glutamine. ATP is bound by residues threonine 315, 344–345 (RL), and 352–354 (MSK). Positions 351 to 355 (IMSKR) match the 'KMSKS' region motif.

This sequence belongs to the class-I aminoacyl-tRNA synthetase family.

It catalyses the reaction tRNA(Gln) + L-glutamine + ATP = L-glutaminyl-tRNA(Gln) + AMP + diphosphate. Functionally, glutamine--tRNA ligase; part of the gene cluster that mediates the biosynthesis of virensols and trichoxide, fungal natural products that contain or are derived from a salicylaldehyde core. VirJ does not seem to play any role in virensols and trichoxide biosynthesis. The polypeptide is Glutamine--tRNA ligase protein virJ (Hypocrea virens (strain Gv29-8 / FGSC 10586) (Gliocladium virens)).